A 357-amino-acid chain; its full sequence is NmrA-like family domain-containing oxidoreductase notA' (357 aa).

Residues 13–18 (GATGAQ), 39–43 (RKPES), 60–61 (DG), 81–83 (TNS), K140, and 164–167 (YMDV) each bind NADP(+).

This sequence belongs to the NmrA-type oxidoreductase family.

Its function is as follows. NmrA-like family domain-containing oxidoreductase; part of the gene cluster that mediates the biosynthesis of notoamide, a fungal indole alkaloid that belongs to a family of natural products containing a characteristic bicyclo[2.2.2]diazaoctane core. The first step of notoamide biosynthesis involves coupling of L-proline and L-tryptophan by the bimodular NRPS notE', to produce cyclo-L-tryptophan-L-proline called brevianamide F. The reverse prenyltransferase notF' then acts as a deoxybrevianamide E synthase and converts brevianamide F to deoxybrevianamide E via reverse prenylation at C-2 of the indole ring leading to the bicyclo[2.2.2]diazaoctane core. Deoxybrevianamide E is further hydroxylated at C-6 of the indole ring, likely catalyzed by the cytochrome P450 monooxygenase notG', to yield 6-hydroxy-deoxybrevianamide E. 6-hydroxy-deoxybrevianamide E is a specific substrate of the prenyltransferase notC' for normal prenylation at C-7 to produce 6-hydroxy-7-prenyl-deoxybrevianamide, also called notoamide S. As the proposed pivotal branching point in notoamide biosynthesis, notoamide S can be diverted to notoamide E through an oxidative pyran ring closure putatively catalyzed by either notH' cytochrome P450 monooxygenase or the notD' FAD-linked oxidoreductase. This step would be followed by an indole 2,3-epoxidation-initiated pinacol-like rearrangement catalyzed by the notB' FAD-dependent monooxygenase leading to the formation of notoamide C and notoamide D. On the other hand notoamide S is converted to notoamide T by notH' (or notD'), a bifunctional oxidase that also functions as the intramolecular Diels-Alderase responsible for generation of (-)-notoamide T. To generate antipodal (+)-notoaminide T, notH (or notD) in Aspergillus strain MF297-2 is expected to catalyze a Diels-Alder reaction leading to the opposite stereochemistry. The remaining oxidoreductase notD' (or notH') likely catalyzes the oxidative pyran ring formation to yield (-)-stephacidin A. The FAD-dependent monooxygenase notI' is highly similar to notB' and is predicted to catalyze a similar conversion from (-)-stephacidin A to (+)-notoamide B via the 2,3-epoxidation of (-)-stephacidin A followed by a pinacol-type rearrangement. Finally, it remains unclear which enzyme could be responsible for the final hydroxylation steps leading to notoamide A and sclerotiamide. The chain is NmrA-like family domain-containing oxidoreductase notA' from Aspergillus versicolor.